Reading from the N-terminus, the 884-residue chain is Alanine--tRNA ligase (884 aa).

Zn(2+) is bound by residues His-562, His-566, Cys-674, and His-678.

This sequence belongs to the class-II aminoacyl-tRNA synthetase family. Requires Zn(2+) as cofactor.

Its subcellular location is the cytoplasm. It catalyses the reaction tRNA(Ala) + L-alanine + ATP = L-alanyl-tRNA(Ala) + AMP + diphosphate. In terms of biological role, catalyzes the attachment of alanine to tRNA(Ala) in a two-step reaction: alanine is first activated by ATP to form Ala-AMP and then transferred to the acceptor end of tRNA(Ala). Also edits incorrectly charged Ser-tRNA(Ala) and Gly-tRNA(Ala) via its editing domain. The sequence is that of Alanine--tRNA ligase from Rhizobium johnstonii (strain DSM 114642 / LMG 32736 / 3841) (Rhizobium leguminosarum bv. viciae).